A 469-amino-acid polypeptide reads, in one-letter code: Ribulose bisphosphate carboxylase large chain (469 aa).

At K7 the chain carries N6,N6,N6-trimethyllysine. Positions 116 and 166 each coordinate substrate. K168 acts as the Proton acceptor in catalysis. Residue K170 coordinates substrate. Residues K194, D196, and E197 each coordinate Mg(2+). K194 carries the post-translational modification N6-carboxylysine. Catalysis depends on H287, which acts as the Proton acceptor. Substrate-binding residues include R288, H320, and S372.

It belongs to the RuBisCO large chain family. Type I subfamily. Heterohexadecamer of 8 large chains and 8 small chains; disulfide-linked. The disulfide link is formed within the large subunit homodimers. Mg(2+) serves as cofactor. In terms of processing, the disulfide bond which can form in the large chain dimeric partners within the hexadecamer appears to be associated with oxidative stress and protein turnover.

Its subcellular location is the plastid. It is found in the chloroplast. The enzyme catalyses 2 (2R)-3-phosphoglycerate + 2 H(+) = D-ribulose 1,5-bisphosphate + CO2 + H2O. It carries out the reaction D-ribulose 1,5-bisphosphate + O2 = 2-phosphoglycolate + (2R)-3-phosphoglycerate + 2 H(+). In terms of biological role, ruBisCO catalyzes two reactions: the carboxylation of D-ribulose 1,5-bisphosphate, the primary event in carbon dioxide fixation, as well as the oxidative fragmentation of the pentose substrate in the photorespiration process. Both reactions occur simultaneously and in competition at the same active site. The polypeptide is Ribulose bisphosphate carboxylase large chain (Pachira aquatica (Guiana chestnut)).